Here is a 145-residue protein sequence, read N- to C-terminus: uncharacterized protein (145 aa).

Substrate-binding residues include Val97 and Asn121.

This sequence belongs to the D-isomer specific 2-hydroxyacid dehydrogenase family. FDH subfamily.

This is an uncharacterized protein from Saccharomyces cerevisiae (strain ATCC 204508 / S288c) (Baker's yeast).